Reading from the N-terminus, the 283-residue chain is Protein/nucleic acid deglycase HchA (283 aa).

Positions 86, 91, and 123 each coordinate Zn(2+). Cys-185 (nucleophile) is an active-site residue.

This sequence belongs to the peptidase C56 family. HchA subfamily. As to quaternary structure, homodimer.

It is found in the cytoplasm. It catalyses the reaction N(omega)-(1-hydroxy-2-oxopropyl)-L-arginyl-[protein] + H2O = lactate + L-arginyl-[protein] + H(+). The enzyme catalyses N(6)-(1-hydroxy-2-oxopropyl)-L-lysyl-[protein] + H2O = lactate + L-lysyl-[protein] + H(+). The catalysed reaction is S-(1-hydroxy-2-oxopropyl)-L-cysteinyl-[protein] + H2O = lactate + L-cysteinyl-[protein] + H(+). It carries out the reaction N(omega)-(1-hydroxy-2-oxoethyl)-L-arginyl-[protein] + H2O = L-arginyl-[protein] + glycolate + H(+). It catalyses the reaction N(6)-(1-hydroxy-2-oxoethyl)-L-lysyl-[protein] + H2O = glycolate + L-lysyl-[protein] + H(+). The enzyme catalyses S-(1-hydroxy-2-oxoethyl)-L-cysteinyl-[protein] + H2O = glycolate + L-cysteinyl-[protein] + H(+). The catalysed reaction is N(2)-(1-hydroxy-2-oxopropyl)-dGTP + H2O = lactate + dGTP + H(+). It carries out the reaction N(2)-(1-hydroxy-2-oxopropyl)-GTP + H2O = lactate + GTP + H(+). It catalyses the reaction N(2)-(1-hydroxy-2-oxopropyl)-GDP + H2O = lactate + GDP + H(+). The enzyme catalyses N(2)-(1-hydroxy-2-oxopropyl)-GMP + H2O = lactate + GMP + H(+). The catalysed reaction is N(2)-(1-hydroxy-2-oxoethyl)-dGTP + H2O = dGTP + glycolate + H(+). It carries out the reaction N(2)-(1-hydroxy-2-oxoethyl)-GTP + H2O = glycolate + GTP + H(+). It catalyses the reaction N(2)-(1-hydroxy-2-oxoethyl)-GDP + H2O = glycolate + GDP + H(+). The enzyme catalyses N(2)-(1-hydroxy-2-oxoethyl)-GMP + H2O = glycolate + GMP + H(+). The catalysed reaction is an N(2)-(1-hydroxy-2-oxopropyl)-guanosine in RNA + H2O = a guanosine in RNA + lactate + H(+). It carries out the reaction an N(2)-(1-hydroxy-2-oxopropyl)-2'-deoxyguanosine in DNA + H2O = a 2'-deoxyguanosine in DNA + lactate + H(+). It catalyses the reaction an N(2)-(1-hydroxy-2-oxoethyl)-guanosine in RNA + H2O = a guanosine in RNA + glycolate + H(+). The enzyme catalyses an N(2)-(1-hydroxy-2-oxoethyl)-2'-deoxyguanosine in DNA + H2O = a 2'-deoxyguanosine in DNA + glycolate + H(+). Functionally, protein and nucleotide deglycase that catalyzes the deglycation of the Maillard adducts formed between amino groups of proteins or nucleotides and reactive carbonyl groups of glyoxals. Thus, functions as a protein deglycase that repairs methylglyoxal- and glyoxal-glycated proteins, and releases repaired proteins and lactate or glycolate, respectively. Deglycates cysteine, arginine and lysine residues in proteins, and thus reactivates these proteins by reversing glycation by glyoxals. Acts on early glycation intermediates (hemithioacetals and aminocarbinols), preventing the formation of Schiff bases and advanced glycation endproducts (AGE). Also functions as a nucleotide deglycase able to repair glycated guanine in the free nucleotide pool (GTP, GDP, GMP, dGTP) and in DNA and RNA. Is thus involved in a major nucleotide repair system named guanine glycation repair (GG repair), dedicated to reversing methylglyoxal and glyoxal damage via nucleotide sanitization and direct nucleic acid repair. Plays an important role in protecting cells from carbonyl stress. This Escherichia coli O81 (strain ED1a) protein is Protein/nucleic acid deglycase HchA.